We begin with the raw amino-acid sequence, 1401 residues long: Alpha-latrotoxin-Lt1a (1401 aa).

The N-terminal stretch at 1–20 (MISVGEIMERANHSLVRMRR) is a signal peptide. The segment at 17–20 (RMRR) is furin-like endopeptidase recognition region. A helix H8 is the probable transmembrane region of the tetrameric pore inserted in the target cell membrane region spans residues 238 to 257 (VLYALLYGTQTYVSVMFFLL). A disulfide bond links Cys-413 and Cys-1066. ANK repeat units lie at residues 458–489 (LYNAASNPDSAVGFKEFTKLNYDGANIRATFD), 490–521 (HGRTVFHAAAKSGNDKIMFGLTFLAKSTELNQ), 525–554 (KGYTPIHVAADSGNAGIVNLLIQRGVSINS), 559–589 (FLQTPLHLAAQRGFVTTFQRLMESPEININE), 593–622 (DGFTPLHYAIRGGERILEAFLNQISIDVNA), 626–656 (TGLTPFHLAIIKNDWPVASTLLGSKKVDINA), 660–690 (NNITALHYAAILGYLETTKQLINLKEINANV), 695–723 (GLLSALHYAILYKHDDVASFLMRSSNVNV), 729–758 (GGITPLHLAVIQGRKQILSLMFDIGVNIEQ), 762–791 (EKYTPLHLAAMSKYPELIQILLDQGSNFEA), 795–824 (SGATPLHLATFKGKSQAALILLNNEVNWRD), 828–857 (NGQMPIHGAAMTGLLDVAQAIISIDATVVD), 862–891 (NSDTPLNLAAQNSHIDVIKYFIDQGADINT), 895–924 (KGLAPLLAFSKKGNLDMVKYLFDKNANVYI), 928–957 (DGMNFFYYAVQNGHLNIVKYAMSEKDKFEW), 971–1003 (EECAISHFAVCDAVQFDRIEIVKYFVGTLGNFA), 1004–1033 (ICGPLHQAARYGHLDIVKYLVEEEFLSVDG), 1035–1064 (KTDTPLCYASENGHFTVVQYLVSNGAKVNH), 1068–1097 (NGMTAIDKAITKNHLQVVQFLAANGVDFRR), 1101–1131 (RGTTPFLTAVAENALHIAEYLIREKRQDINI), 1137–1166 (DKDTALHLAVYYKNLQMIKLLIKYGIDVTI), and 1170–1199 (YDKTALDIAIDAKFSNIVEYLKTKSGKFRR). The tract at residues 1026-1032 (EEFLSVD) is 4C4.1 epitope. A furin-like endopeptidase recognition region region spans residues 1196–1199 (KFRR). Residues 1200–1401 (EYKSSYGERS…SDGILTKKLM (202 aa)) constitute a propeptide that is removed on maturation.

The protein belongs to the cationic peptide 01 (latrotoxin) family. 03 (alpha-latrotoxin) subfamily. In terms of assembly, homotetramer in membranes. Processed by furin-like proteases at both the N- and C-termini. Expressed in venom gland, cephalothorax, and abdomen tissues from both males and females.

It localises to the secreted. It is found in the target cell membrane. Presynaptic neurotoxin that causes massive release of neurotransmitters from vertebrate (but not invertebrate) nerve terminals and endocrine cells via a complex mechanism involving activation of receptor(s) and toxin insertion into the plasma membrane with subsequent pore formation. Binds to neurexin-1-alpha (NRXN1) in a calcium dependent manner, adhesion G protein-coupled receptor L1 (ADGRL1, also termed latrophilin-1 and calcium-independent receptor of latrotoxin (CIRL)), and receptor-type tyrosine-protein phosphatase S (PTPRS), also termed PTP sigma. NRXN1 and PTPRS are suggested to provide a platform for binding and subsequent pore formation events. In contrast, binding to ADGRL1 does not involve oligomerization and channel formation, but direct downstream stimulation of the synaptic fusion machinery. This is Alpha-latrotoxin-Lt1a from Latrodectus tredecimguttatus (Mediterranean black widow spider).